A 194-amino-acid chain; its full sequence is uncharacterized protein (194 aa).

The helical transmembrane segment at 17–37 (DVWLYLLVFGCLSVLVLVLVH) threads the bilayer.

It belongs to the IIV-6 307L family.

It is found in the membrane. This is an uncharacterized protein from Invertebrate iridescent virus 3 (IIV-3).